The chain runs to 1004 residues: Copper-transporting ATPase (1004 aa).

The Cytoplasmic portion of the chain corresponds to 1–262; sequence MREVILAVHG…FWKKNSIKST (262 aa). HMA domains follow at residues 2 to 67 and 80 to 146; these read REVI…FDCE and KEGL…FDSN. Positions 13, 16, 91, and 94 each coordinate Cu(+). A helical transmembrane segment spans residues 263–283; that stretch reads LLAIICMLLYMIVPMMWPTIV. The Lumenal, vesicle portion of the chain corresponds to 284–303; that stretch reads QDRIFPYKETSFVRGLFYRD. Residues 304 to 324 form a helical membrane-spanning segment; sequence ILGVILASYIQFSVGFYFYKA. The Cytoplasmic segment spans residues 325–335; the sequence is AWASLKHGSGT. A helical membrane pass occupies residues 336–356; it reads MDTLVCVSTTCAYTFSVFSLV. At 357-370 the chain is on the lumenal, vesicle side; the sequence is HNMFHPSSTGKLPR. A helical transmembrane segment spans residues 371 to 391; that stretch reads IVFDTSIMIISYISIGKYLET. Over 392 to 528 the chain is Cytoplasmic; it reads LAKSQTSTAL…IQGYADYLAS (137 aa). The helical transmembrane segment at 529 to 549 threads the bilayer; sequence IFVPGILILAVLTFFIWCFIL. The Lumenal, vesicle portion of the chain corresponds to 550–577; it reads NISANPPVAFTANTKADNFFICLQTATS. Residues 578 to 598 traverse the membrane as a helical segment; that stretch reads VVIVACPCALGLATPTAIMVG. Over 599–901 the chain is Cytoplasmic; the sequence is TGVGAQNGVL…LKTFKRIKLN (303 aa). The active-site 4-aspartylphosphate intermediate is aspartate 627. Mg(2+)-binding residues include aspartate 838 and aspartate 842. Residues 902–924 traverse the membrane as a helical segment; that stretch reads LFWALCYNIFMIPIAMGVLIPWG. Residues 925–927 are Lumenal, vesicle-facing; that stretch reads ITL. A helical transmembrane segment spans residues 928–950; sequence PPMLAGLAMAFSSVSVVLSSLML. Residues 951–1004 lie on the Cytoplasmic side of the membrane; the sequence is KKWTPPDIESHGISDFKSKFSIGNFWSRLFSTRAIAGEQDIESQAGLMSNEEVL.

It belongs to the cation transport ATPase (P-type) (TC 3.A.3) family. Type IB subfamily. As to quaternary structure, interacts with the copper chaperone ATX1 via the copper anion.

Its subcellular location is the golgi apparatus. The protein resides in the trans-Golgi network membrane. It catalyses the reaction Cu(+)(in) + ATP + H2O = Cu(+)(out) + ADP + phosphate + H(+). Its function is as follows. Copper-transporting P-type ATPase necessary for the proper uptake of iron. Required for export of copper from cytosol into extracytosolic compartment. Retrieves copper from the metallochaperone ATX1 and incorporates it into trans-Golgi vesicles where they are acquired by the cell-surface iron transporter FET3. Required the production of inositolphosphorylceramide D, probably by delivering copper to a yet to be identified enzyme. The sequence is that of Copper-transporting ATPase from Saccharomyces cerevisiae (strain ATCC 204508 / S288c) (Baker's yeast).